The sequence spans 82 residues: Consomatin Ar1 (82 aa).

An N-terminal signal peptide occupies residues 1 to 22 (MQTAYWVVVMMMMVWVTAPVSE). Residues 23–60 (GGKLSDVIWGLVPDDLTPQIILQILNASRHAYRRVRPR) constitute a propeptide that is removed on maturation. The cysteines at positions 64 and 69 are disulfide-linked. Tryptophan 66 carries the D-tryptophan modification. 4-hydroxyproline is present on residues proline 70, proline 71, and proline 73. Residues 74–82 (QWIHPLVKR) constitute a propeptide that is removed on maturation.

It belongs to the conotoxin C superfamily. Consomatin family. As to expression, expressed by the venom duct.

It is found in the secreted. Functionally, moderately activates human somatostatin receptors (SSTR) with a preferential activation of SSTR1 and SSTR4. In vivo, does not cause behavioral changes in mice within a few minutes of intracranial injection, but causes a progressive loss of movement thereafter. Four to five hours after injection, mice recover, even with the highest dose tested. Shows antinociception and antihyperalgesia activities in two mouse models of acute pain, most probably by acting outside the central nervous system. This chain is Consomatin Ar1, found in Conus arenatus (Sand-dusted cone).